Here is a 364-residue protein sequence, read N- to C-terminus: FMNH(2)-dependent dimethylsulfone monooxygenase (364 aa).

It belongs to the SsuD family.

The catalysed reaction is dimethyl sulfone + FMNH2 + O2 = methanesulfinate + FMN + formaldehyde + H2O + 2 H(+). Involved in the dimethyl sulfide degradation pathway. Catalyzes the oxidation of dimethylsulfone (DMSO2) to yield methanesulfinate, which is oxidized spontaneously to methanesulfonate in the presence of dioxygen and FMNH(2). The polypeptide is FMNH(2)-dependent dimethylsulfone monooxygenase (Pseudomonas fluorescens (strain Pf0-1)).